Here is a 272-residue protein sequence, read N- to C-terminus: ATP phosphoribosyltransferase regulatory subunit (272 aa).

The protein belongs to the class-II aminoacyl-tRNA synthetase family. HisZ subfamily. In terms of assembly, heteromultimer composed of HisG and HisZ subunits.

It localises to the cytoplasm. It participates in amino-acid biosynthesis; L-histidine biosynthesis; L-histidine from 5-phospho-alpha-D-ribose 1-diphosphate: step 1/9. Its function is as follows. Required for the first step of histidine biosynthesis. May allow the feedback regulation of ATP phosphoribosyltransferase activity by histidine. The chain is ATP phosphoribosyltransferase regulatory subunit from Staphylococcus aureus (strain MRSA252).